Here is a 131-residue protein sequence, read N- to C-terminus: MARPPPPDTPARRRKQAAHARGLAAEDRAAAVLEAQSFRILARRLRTSAGELDLVARRDDLLVFCEVKLRRSLAEAAESLQLRQRRRIIAAAELFLADHPELAPLAMRFDAILLGRDGGAEHLEGAFELEG.

This sequence belongs to the UPF0102 family.

The chain is UPF0102 protein AZC_4471 from Azorhizobium caulinodans (strain ATCC 43989 / DSM 5975 / JCM 20966 / LMG 6465 / NBRC 14845 / NCIMB 13405 / ORS 571).